The primary structure comprises 793 residues: Sucrose synthase (793 aa).

Residues 263-742 (MISRILIVSI…ALARVAERYT (480 aa)) are GT-B glycosyltransferase.

This sequence belongs to the glycosyltransferase 1 family. Homotetramer.

The catalysed reaction is an NDP-alpha-D-glucose + D-fructose = a ribonucleoside 5'-diphosphate + sucrose + H(+). It catalyses the reaction ADP-alpha-D-glucose + D-fructose = sucrose + ADP + H(+). In terms of biological role, catalyzes the reversible conversion of sucrose and a nucleotide disphosphate (NDP) into fructose and NDP-glucose; although the reaction is freely reversible in vitro, the physiological reaction seems to be sucrose cleavage. Unlike characterized plant enzymes prefers ADP as a cosubstrate, whereas plants prefer UDP. The KM for sucrose is 45-fold lower in the presence of ADP than UDP. Its preference for ADP over UDP suggests it may directly link sucrose and glycogen metabolism. In Acidithiobacillus caldus (strain ATCC 51756 / DSM 8584 / KU), this protein is Sucrose synthase.